We begin with the raw amino-acid sequence, 332 residues long: UPF0194 membrane protein YbhG (332 aa).

The N-terminal stretch at 1–16 (MMKKTVVIGLAVVVLA) is a signal peptide. Residues 108-209 (EEIAQAAAAV…LNLQDSTLIA (102 aa)) adopt a coiled-coil conformation.

It belongs to the UPF0194 family.

Its subcellular location is the periplasm. The chain is UPF0194 membrane protein YbhG from Shigella dysenteriae serotype 1 (strain Sd197).